Here is a 32-residue protein sequence, read N- to C-terminus: CSNLSTCVLGKLSQDLHKLQTFPRTNTGAGVP.

A disulfide bridge links C1 with C7. The residue at position 32 (P32) is a Proline amide.

The protein belongs to the calcitonin family.

It localises to the secreted. Causes a rapid but short-lived drop in the level of calcium and phosphate in blood by promoting the incorporation of those ions in the bones. In Oncorhynchus gorbuscha (Pink salmon), this protein is Calcitonin-2.